Reading from the N-terminus, the 930-residue chain is RNA-binding protein 10 (930 aa).

Basic and acidic residues-rich tracts occupy residues 1–14 (MEYE…DRTG) and 21–45 (RSQD…RSYP). The interval 1–127 (MEYERRGGRG…EEDEEEEEKA (127 aa)) is disordered. The residue at position 2 (E2) is an N-acetylserine. A phosphoserine mark is found at R30, S61, and S89. The segment covering 59 to 70 (DSSEEQSAEDSY) has biased composition (acidic residues). Residues 80–89 (RRRRRRHRHS) are compositionally biased toward basic residues. Positions 98 to 111 (RDGDYRDQDYRTEQ) are enriched in basic and acidic residues. Residues 112 to 125 (GEEEEEEEDEEEEE) show a composition bias toward acidic residues. The region spanning 129 to 209 (NIVMLRMLPQ…QKVSMHYSDP (81 aa)) is the RRM 1 domain. The segment at 212-242 (KINEDWLCNKCGVQNFKRREKCFKCGVPKSE) adopts a RanBP2-type zinc-finger fold. The 85-residue stretch at 300-384 (DTIILRNLNP…KTINVEFAKG (85 aa)) folds into the RRM 2 domain. N6-acetyllysine is present on K383. Disordered stretches follow at residues 466-524 (PGIT…AANS), 537-569 (SELQ…VPDV), 620-685 (EQSA…DERR), and 700-753 (KGAL…EEKL). The segment covering 508-524 (YQQSAEASSSQGTAANS) has biased composition (polar residues). Residues 541–557 (SPTHPSSALPPATSPTA) show a composition bias toward low complexity. Basic and acidic residues-rich tracts occupy residues 623–639 (ADGH…GKEK), 653–669 (KDME…KENF), and 700–709 (KGALAERQHT). S718, S723, S733, S736, and S738 each carry phosphoserine. Residues 743–753 (ERGGPEREEKL) show a composition bias toward basic and acidic residues. The C2H2-type; atypical zinc-finger motif lies at 759–784 (LACLLCRRQFPSKEALIRHQQLSGLH). Phosphoserine occurs at positions 781 and 797. A compositionally biased stretch (basic and acidic residues) spans 815 to 826 (RDRAAERREKYG). A disordered region spans residues 815-861 (RDRAAERREKYGIPEPPEPKRRKYGGISTASVDFEQPTRDGLGSDNI). A Phosphoserine modification is found at S845. Residues 858-904 (SDNIGSRMLQAMGWKEGSGLGRKKQGIVTPIEAQTRVRGSGLGARGS) enclose the G-patch domain. R902 is modified (omega-N-methylarginine).

In terms of assembly, associates with the spliceosome. Component of a large chromatin remodeling complex, at least composed of MYSM1, PCAF, RBM10 and KIF11/TRIP5.

It is found in the nucleus. Its function is as follows. Binds to ssRNA containing the consensus sequence 5'-AGGUAA-3'. May be involved in post-transcriptional processing, most probably in mRNA splicing. Binds to RNA homopolymers, with a preference for poly(G) and poly(U) and little for poly(A). May bind to specific miRNA hairpins. This chain is RNA-binding protein 10, found in Homo sapiens (Human).